The chain runs to 491 residues: Ketol-acid reductoisomerase (NADP(+)) (491 aa).

Residues 15–208 (AQLGKCRFMG…GGHRAGVLES (194 aa)) form the KARI N-terminal Rossmann domain. Residues 45 to 48 (CGAQ), R68, R76, S78, and 108 to 110 (DKQ) each bind NADP(+). H132 is an active-site residue. G158 serves as a coordination point for NADP(+). KARI C-terminal knotted domains are found at residues 209–344 (SFVA…TAPQ) and 345–484 (YEGK…MTDM). Residues D217, E221, E389, and E393 each coordinate Mg(2+). S414 serves as a coordination point for substrate.

Belongs to the ketol-acid reductoisomerase family. It depends on Mg(2+) as a cofactor.

It catalyses the reaction (2R)-2,3-dihydroxy-3-methylbutanoate + NADP(+) = (2S)-2-acetolactate + NADPH + H(+). It carries out the reaction (2R,3R)-2,3-dihydroxy-3-methylpentanoate + NADP(+) = (S)-2-ethyl-2-hydroxy-3-oxobutanoate + NADPH + H(+). Its pathway is amino-acid biosynthesis; L-isoleucine biosynthesis; L-isoleucine from 2-oxobutanoate: step 2/4. It functions in the pathway amino-acid biosynthesis; L-valine biosynthesis; L-valine from pyruvate: step 2/4. Involved in the biosynthesis of branched-chain amino acids (BCAA). Catalyzes an alkyl-migration followed by a ketol-acid reduction of (S)-2-acetolactate (S2AL) to yield (R)-2,3-dihydroxy-isovalerate. In the isomerase reaction, S2AL is rearranged via a Mg-dependent methyl migration to produce 3-hydroxy-3-methyl-2-ketobutyrate (HMKB). In the reductase reaction, this 2-ketoacid undergoes a metal-dependent reduction by NADPH to yield (R)-2,3-dihydroxy-isovalerate. The protein is Ketol-acid reductoisomerase (NADP(+)) of Citrobacter koseri (strain ATCC BAA-895 / CDC 4225-83 / SGSC4696).